The following is a 1097-amino-acid chain: RecBCD enzyme subunit RecC (1097 aa).

The protein belongs to the RecC family. In terms of assembly, heterotrimer of RecB, RecC and RecD. All subunits contribute to DNA-binding.

Its function is as follows. A helicase/nuclease that prepares dsDNA breaks (DSB) for recombinational DNA repair. Binds to DSBs and unwinds DNA via a highly rapid and processive ATP-dependent bidirectional helicase activity. Holoenzyme degrades any linearized DNA that is unable to undergo homologous recombination. In the holoenzyme this subunit recognizes the wild-type Chi sequence, and when added to isolated RecB increases its ATP-dependent helicase processivity. Unlike the case in E.coli, suppresses RecA-dependent homologous recombination, is instead required for single-strand annealing pathway repair of DSB. The polypeptide is RecBCD enzyme subunit RecC (Mycobacterium tuberculosis (strain ATCC 25618 / H37Rv)).